We begin with the raw amino-acid sequence, 734 residues long: ABC transporter D family member 1 (734 aa).

Transmembrane regions (helical) follow at residues 52–72 (IIKI…ILFG), 112–132 (FAIG…SIMA), 177–197 (FTTL…VVVY), and 204–224 (TTID…GYLI). The region spanning 63 to 351 (PLTLFLILFG…VEEEQAKIQF (289 aa)) is the ABC transmembrane type-1 domain. The segment covering 271–286 (HPEKRFDNNDYDHGYE) has biased composition (basic and acidic residues). The tract at residues 271–296 (HPEKRFDNNDYDHGYESDDSDQSCDE) is disordered. The stretch at 332–359 (DSNDQKEELLVEEEQAKIQFEALLKNKK) forms a coiled coil. The chain crosses the membrane as a helical span at residues 374-394 (LFTYLSPIANYFIIAIPVFFL). The ABC transporter domain maps to 492-729 (ITLDDVTYFT…NNNNTNKIAE (238 aa)). 525–532 (GPSGSGKS) is a binding site for ATP. The span at 712 to 725 (QSNNINNNNNNNTN) shows a compositional bias: low complexity. The disordered stretch occupies residues 712–734 (QSNNINNNNNNNTNKIAEDSVFD).

This sequence belongs to the ABC transporter superfamily. ABCD family. Peroxisomal fatty acyl CoA transporter (TC 3.A.1.203) subfamily.

It is found in the membrane. The catalysed reaction is (9Z)-octadecenoyl-CoA(in) = (9Z)-octadecenoyl-CoA(out). In Dictyostelium discoideum (Social amoeba), this protein is ABC transporter D family member 1 (abcD1).